The sequence spans 846 residues: DNA mismatch repair protein MutS (846 aa).

Residue 610–617 (GPNMGGKS) participates in ATP binding.

It belongs to the DNA mismatch repair MutS family.

In terms of biological role, this protein is involved in the repair of mismatches in DNA. It is possible that it carries out the mismatch recognition step. This protein has a weak ATPase activity. The protein is DNA mismatch repair protein MutS of Legionella pneumophila (strain Paris).